The sequence spans 87 residues: Large ribosomal subunit protein eL31 (87 aa).

Belongs to the eukaryotic ribosomal protein eL31 family.

This chain is Large ribosomal subunit protein eL31 (rpl31e), found in Methanocaldococcus jannaschii (strain ATCC 43067 / DSM 2661 / JAL-1 / JCM 10045 / NBRC 100440) (Methanococcus jannaschii).